Consider the following 276-residue polypeptide: Large ribosomal subunit protein uL2 (276 aa).

Disordered stretches follow at residues 29–55 and 219–276; these read PEKS…RHRG and HVRG…RRTR. The segment covering 259–276 has biased composition (basic residues); that stretch reads TRNKKKQSSKLIVRRRTR.

It belongs to the universal ribosomal protein uL2 family. Part of the 50S ribosomal subunit. Forms a bridge to the 30S subunit in the 70S ribosome.

Its function is as follows. One of the primary rRNA binding proteins. Required for association of the 30S and 50S subunits to form the 70S ribosome, for tRNA binding and peptide bond formation. It has been suggested to have peptidyltransferase activity; this is somewhat controversial. Makes several contacts with the 16S rRNA in the 70S ribosome. In Rippkaea orientalis (strain PCC 8801 / RF-1) (Cyanothece sp. (strain PCC 8801)), this protein is Large ribosomal subunit protein uL2.